The chain runs to 272 residues: Cell wall synthesis protein Wag31 (272 aa).

2 disordered regions span residues 1 to 22 (MPLTPADVHNVAFSKPPIGKRG) and 62 to 109 (AARS…SEDT). Residues 30 to 67 (AFLDLVENELTRLIEENADLRQRVAELDQELAAARSGA) are a coiled coil. Low complexity-rich tracts occupy residues 62 to 76 (AARSGAGASSQATSS) and 94 to 105 (VYEAPAQPAAPQ). The residue at position 74 (Thr-74) is a Phosphothreonine. A coiled-coil region spans residues 139–206 (LSDARAQAEA…AERKHSEIMG (68 aa)). Residues 243-272 (ELGQRGSAAPVDSSANSDASGFGQFNRGNN) form a disordered region.

The protein belongs to the DivIVA family. In terms of assembly, forms homooligomers. Interacts with PbpB and CwsA. In terms of processing, phosphorylated by PknA.

It localises to the cytoplasm. Functionally, important for maintaining cell shape and cell wall integrity by localizing peptidoglycan synthesis to the cell poles. Protects PbpB (PBP3, FtsI) from oxidative stress-induced cleavage. In Mycolicibacterium smegmatis (strain ATCC 700084 / mc(2)155) (Mycobacterium smegmatis), this protein is Cell wall synthesis protein Wag31 (wag31).